A 103-amino-acid polypeptide reads, in one-letter code: Putative membrane protein insertion efficiency factor (103 aa).

The protein belongs to the UPF0161 family.

Its subcellular location is the cell membrane. Its function is as follows. Could be involved in insertion of integral membrane proteins into the membrane. The sequence is that of Putative membrane protein insertion efficiency factor from Clavibacter sepedonicus (Clavibacter michiganensis subsp. sepedonicus).